We begin with the raw amino-acid sequence, 113 residues long: Ribonuclease P protein component (113 aa).

This sequence belongs to the RnpA family. In terms of assembly, consists of a catalytic RNA component (M1 or rnpB) and a protein subunit.

It catalyses the reaction Endonucleolytic cleavage of RNA, removing 5'-extranucleotides from tRNA precursor.. Its function is as follows. RNaseP catalyzes the removal of the 5'-leader sequence from pre-tRNA to produce the mature 5'-terminus. It can also cleave other RNA substrates such as 4.5S RNA. The protein component plays an auxiliary but essential role in vivo by binding to the 5'-leader sequence and broadening the substrate specificity of the ribozyme. This is Ribonuclease P protein component from Ligilactobacillus salivarius (strain UCC118) (Lactobacillus salivarius).